We begin with the raw amino-acid sequence, 87 residues long: Cell division topological specificity factor (87 aa).

The protein belongs to the MinE family.

Functionally, prevents the cell division inhibition by proteins MinC and MinD at internal division sites while permitting inhibition at polar sites. This ensures cell division at the proper site by restricting the formation of a division septum at the midpoint of the long axis of the cell. This chain is Cell division topological specificity factor, found in Leptothrix cholodnii (strain ATCC 51168 / LMG 8142 / SP-6) (Leptothrix discophora (strain SP-6)).